Here is a 220-residue protein sequence, read N- to C-terminus: Probable metallo-hydrolase YybB (220 aa).

Residues histidine 67, histidine 69, aspartate 71, histidine 72, histidine 139, aspartate 158, and histidine 200 each coordinate Zn(2+).

Belongs to the metallo-beta-lactamase superfamily. Zn(2+) is required as a cofactor.

The protein is Probable metallo-hydrolase YybB (yybB) of Bacillus subtilis (strain 168).